The primary structure comprises 715 residues: Protein DOA1 (715 aa).

7 WD repeats span residues 11–40, 53–82, 97–125, 135–166, 177–206, 218–247, and 259–288; these read GHDQ…RLWS, GQGF…NGVP, GHQG…KVWK, AHNA…KLWQ, IHND…KLVD, GHES…RIWS, and LPAI…RIFS. Residue Ser-332 is modified to Phosphoserine. Positions 352-449 constitute a PFU domain; it reads AHQFSNSSWK…NGISLDQPND (98 aa). An interaction with HSE1 region spans residues 434–440; sequence FILKNTN. Positions 465 to 715 constitute a PUL domain; the sequence is KVLPVKQYLI…RFKDIFDDLS (251 aa). ARM repeat units lie at residues 478–512, 513–543, 544–582, 583–635, 636–680, and 681–715; these read YNPD…LHDI, DESW…VRLI, VKKL…CFNN, ENWG…LVTK, GNSD…LATV, and EPTL…DDLS.

The protein belongs to the WD repeat PLAP family. In terms of assembly, forms a complex composed of CDC48, NPL4, UFD1, DOA1, SHP1 and deubiquitinase OTU1; within the complex interacts with CDC48. Interacts (via PUL domain) with CDC48 (via C-terminus); the interaction is direct. Forms a complex composed of CDC48, DOA1, deubiquitinase UBP3 and probably BRE5; within the complex interacts with CDC48 and UBP3. May form a complex composed of VPS27, HSE1 and DOA1. Interacts with HSE1 (via SH3 domain). Interacts (via WD repeats and PFU domain) with ubiquitin; the interaction is direct. Interacts with ubiquitinated FZO1 but not unmodified FZO1; the interaction recruits FZO1 to CDC48 and promotes FZO1 proteasomal degradation.

It is found in the nucleus. It localises to the cytoplasm. The protein localises to the mitochondrion outer membrane. The protein resides in the endosome membrane. Its function is as follows. Ubiquitin-binding protein involved in protein ubiquitination, sorting and degradation. Acts as a ubiquitinated substrate-recruiting adapter for chaperone ATPase CDC48 by binding mono- or polyubiquitin chains. Depending on the context, promotes or prevents proteasomal degradation of ubiquitinated proteins. Involved in the ubiquitin fusion degradation (UFD) pathway by promoting the degradation of ubiquitinated proteins. Involved in the mitochondria-associated degradation pathway (MAD) by promoting the degradation of several ubiquitinated membrane proteins. By competing with UFD2 to bind CDC48, prevents the multi-ubiquitination and subsequent degradation of UFD2-dependent substrates. Required for ribophagy, a process which relocalizes ribosomal particles into the vacuole for degradation in response to starvation. Involved in the ubiquitin-mediated sorting of membrane proteins into multivesicular bodies (MVBs). In addition, plays an essential role in maintaining cellular ubiquitin levels. May affect indirectly the degradation of ubiquitinylated proteins by regulating cellular ubiquitin levels. This Saccharomyces cerevisiae (strain ATCC 204508 / S288c) (Baker's yeast) protein is Protein DOA1.